Here is a 375-residue protein sequence, read N- to C-terminus: Sulfite efflux pump SSU1 (375 aa).

Residues 1-25 (MPSGSGFHNIEEAGEKARKRDDWIA) are Cytoplasmic-facing. Residues 26–46 (ISNFHPGWFSVNMGTGITAIL) traverse the membrane as a helical segment. At 47–59 (LQNLPYQFPGLHY) the chain is on the extracellular side. A helical membrane pass occupies residues 60 to 80 (IAVVLFILNVIIFFLFLTISI). The Cytoplasmic portion of the chain corresponds to 81-101 (TRYCLWPDKFKAMLAHPAHSM). Residues 102–122 (LLGTFPMGFATIINCIVFICV) traverse the membrane as a helical segment. Residues 123 to 135 (PVWGEWASRFAWG) lie on the Extracellular side of the membrane. The chain crosses the membrane as a helical span at residues 136-156 (LWWIDAAVSVAICYFVPFMLM). The Cytoplasmic segment spans residues 157–167 (TKHTSSLETMT). The chain crosses the membrane as a helical span at residues 168-188 (AAWLLPIVAPVVAAASGGVVA). The Extracellular segment spans residues 189 to 200 (DSLQNDTHALIT). The N-linked (GlcNAc...) asparagine glycan is linked to asparagine 193. The helical transmembrane segment at 201-221 (ILVCYAMWGSAVPLAMVILVI) threads the bilayer. Residues 222 to 234 (YFQRLAIHKLVPR) are Cytoplasmic-facing. Residues 235-255 (AAIVSALLPIGPLGQGGFGLM) form a helical membrane-spanning segment. The Extracellular portion of the chain corresponds to 256 to 277 (QLGVVAKRVFPRLDFLAPIAGD). Residues 278-298 (IFYVMGAFIAMIMWGFGLIWL) traverse the membrane as a helical segment. Topologically, residues 299 to 309 (WFALASFTRGK) are cytoplasmic. A helical transmembrane segment spans residues 310–330 (FYFNIGWWAFTFPLGVFTTAT). Residues 331-343 (TQMGKEFNSPFFD) lie on the Extracellular side of the membrane. A helical transmembrane segment spans residues 344–364 (ILGTFFSIVVTCMWVLVFALT). Topologically, residues 365–375 (VYKSCTKELFR) are cytoplasmic.

It belongs to the tellurite-resistance/dicarboxylate transporter (TDT) family.

The protein localises to the cell membrane. Its function is as follows. Sulphite efflux pump required for the secretion of sulphite as a reducing agent. In the presence of sulphite, cystine in keratin is directly cleaved to cysteine and S-sulphocysteine, and thereby, reduced proteins become accessible to hydrolysis by a variety of secreted endo- and exoproteases. Excretion of sulphite mediated by an efflux pump also represents a detoxification pathway for dermatophytes during infection of the epidermal stratum corneum, hair and nails, which are rich in cysteine. The polypeptide is Sulfite efflux pump SSU1 (SSU1) (Trichophyton rubrum (Athlete's foot fungus)).